Reading from the N-terminus, the 311-residue chain is Dehydrogenase/reductase SDR family member 7C (311 aa).

A signal peptide spans 1 to 18 (MGFLTFLIVPLLILGISG). 41–65 (VITDAISGLGKECSRVFHSAGARLV) serves as a coordination point for NAD(+). T178 is a substrate binding site. Y191 functions as the Proton acceptor in the catalytic mechanism.

This sequence belongs to the short-chain dehydrogenases/reductases (SDR) family.

The protein resides in the secreted. In terms of biological role, putative oxidoreductase. The protein is Dehydrogenase/reductase SDR family member 7C (dhrs7c) of Xenopus tropicalis (Western clawed frog).